Consider the following 50-residue polypeptide: uncharacterized protein (50 aa).

This is an uncharacterized protein from Sulfolobus islandicus filamentous virus (isolate Iceland/Hveragerdi) (SIFV).